We begin with the raw amino-acid sequence, 208 residues long: Methylthioribulose-1-phosphate dehydratase (208 aa).

Zn(2+) is bound by residues His-96 and His-98.

The protein belongs to the aldolase class II family. MtnB subfamily. Zn(2+) is required as a cofactor.

It carries out the reaction 5-(methylsulfanyl)-D-ribulose 1-phosphate = 5-methylsulfanyl-2,3-dioxopentyl phosphate + H2O. It participates in amino-acid biosynthesis; L-methionine biosynthesis via salvage pathway; L-methionine from S-methyl-5-thio-alpha-D-ribose 1-phosphate: step 2/6. Its function is as follows. Catalyzes the dehydration of methylthioribulose-1-phosphate (MTRu-1-P) into 2,3-diketo-5-methylthiopentyl-1-phosphate (DK-MTP-1-P). The protein is Methylthioribulose-1-phosphate dehydratase of Pseudomonas fluorescens (strain Pf0-1).